The sequence spans 491 residues: Equilibrative nucleobase transporter 1 (491 aa).

The chain crosses the membrane as a helical span at residues 17-37 (LLECLGFAGVLFGWPSLVFVF). Asparagine 56 carries N-linked (GlcNAc...) asparagine glycosylation. A run of 5 helical transmembrane segments spans residues 72–92 (LIFTLGSFMNNFMTFPTGYIF), 102–122 (LIAIFFYTTATLIIAFTSAGS), 123–143 (AVLLFLAMPMLTIGGILFLIT), 156–176 (STIITLYNGAFDSSSAVFLII), and 188–208 (ASFIFISVCSTWHVARTFLLM). Residues asparagine 220 and asparagine 229 are each glycosylated (N-linked (GlcNAc...) asparagine). Position 253 is a phosphoserine (serine 253). Threonine 258 is modified (phosphothreonine). Helical transmembrane passes span 279–299 (FAWHLVWLSVIQLWHYLFIGT), 319–339 (TNAFAFTQFGVLCAPWNGLLM), 356–376 (STLAVALCSTVPSLALTSLLC), 396–418 (ILQVISRSFLYGSNAAFLTLAFP), 427–447 (GLVMALSAVVSLLQFPIFTLI), and 456–476 (FYVNVMFMLAILLTFFHPFLV).

This sequence belongs to the SLC43A transporter (TC 2.A.1.44) family. In terms of tissue distribution, widely expressed with highest levels in the liver and lung, followed by the pancreas. Highly expressed in macrophages.

Its subcellular location is the basolateral cell membrane. The enzyme catalyses adenine(out) = adenine(in). The catalysed reaction is guanine(out) = guanine(in). It carries out the reaction hypoxanthine(out) = hypoxanthine(in). Adenine transport is strongly inhibited by decynium-22. Its activity is regulated as follows. 6-mercaptopurine-transport is inhibited by 6-thioguanine, 6-methylmercaptopurine and decynium-22. Its function is as follows. Sodium-independent purine-selective nucleobase transporter which mediates the equilibrative transport of extracellular purine nucleobases such as adenine, guanine and hypoxanthine. May regulate fatty acid (FA) transport in adipocytes, acting as a positive regulator of FA efflux and as a negative regulator of FA uptake. Sodium-independent purine-selective nucleobase transporter which mediates the equilibrative transport of extracellular purine nucleobase adenine. Mediates the influx and efflux of the purine nucleobase analog drug 6-mercaptopurine across the membrane. The chain is Equilibrative nucleobase transporter 1 (SLC43A3) from Homo sapiens (Human).